The following is a 349-amino-acid chain: Autophagy-related protein 3 (349 aa).

Residues 95–173 (ALVNDGDDFK…IRDSGADSKN (79 aa)) are flexible region. Cysteine 244 acts as the Glycyl thioester intermediate in catalysis. The handle region stretch occupies residues 248-325 (SVMKTLLDRA…DQEVAIRVDQ (78 aa)). The ATG8 interaction motif (AIM) motif lies at 306–309 (WEEV).

The protein belongs to the ATG3 family. In terms of assembly, monomer. Interacts with ATG8 through an intermediate thioester bond between Cys-244 and the C-terminal Gly of ATG8. Interacts with the C-terminal region of the E1-like ATG7 enzyme. Also interacts with the ATG12-ATG5 conjugate.

The protein localises to the cytoplasm. In terms of biological role, E2 conjugating enzyme required for the cytoplasm to vacuole transport (Cvt) and autophagy. Required for selective autophagic degradation of the nucleus (nucleophagy) as well as for mitophagy which contributes to regulate mitochondrial quantity and quality by eliminating the mitochondria to a basal level to fulfill cellular energy requirements and preventing excess ROS production. Responsible for the E2-like covalent binding of phosphatidylethanolamine to the C-terminal Gly of ATG8. The ATG12-ATG5 conjugate plays a role of an E3 and promotes the transfer of ATG8 from ATG3 to phosphatidylethanolamine (PE). This step is required for the membrane association of ATG8. The formation of the ATG8-phosphatidylethanolamine conjugate is essential for autophagy and for the cytoplasm to vacuole transport (Cvt). The ATG8-PE conjugate mediates tethering between adjacent membranes and stimulates membrane hemifusion, leading to expansion of the autophagosomal membrane during autophagy. Autophagy is required for proper vegetative growth, asexual/sexual reproduction, and full virulence. Autophagy is particularly involved in the biosynthesis of deoxynivalenol (DON), an important virulence determinant. The chain is Autophagy-related protein 3 from Gibberella zeae (strain ATCC MYA-4620 / CBS 123657 / FGSC 9075 / NRRL 31084 / PH-1) (Wheat head blight fungus).